A 257-amino-acid polypeptide reads, in one-letter code: Triosephosphate isomerase (257 aa).

2 residues coordinate substrate: Asn11 and Lys13. His96 functions as the Electrophile in the catalytic mechanism. Glu170 serves as the catalytic Proton acceptor.

It belongs to the triosephosphate isomerase family. As to quaternary structure, homodimer.

It catalyses the reaction D-glyceraldehyde 3-phosphate = dihydroxyacetone phosphate. The protein operates within carbohydrate biosynthesis; gluconeogenesis. It functions in the pathway carbohydrate degradation; glycolysis; D-glyceraldehyde 3-phosphate from glycerone phosphate: step 1/1. In Giardia intestinalis (Giardia lamblia), this protein is Triosephosphate isomerase.